A 151-amino-acid polypeptide reads, in one-letter code: uncharacterized protein (151 aa).

This is an uncharacterized protein from Gallid herpesvirus 2 (strain GA) (GaHV-2).